The primary structure comprises 436 residues: Hydrogenobyrinate a,c-diamide synthase (436 aa).

The GATase cobBQ-type domain maps to Arg-244–Ala-435. Catalysis depends on Cys-327, which acts as the Nucleophile.

Belongs to the CobB/CbiA family. It depends on Mg(2+) as a cofactor.

It catalyses the reaction hydrogenobyrinate + 2 L-glutamine + 2 ATP + 2 H2O = hydrogenobyrinate a,c-diamide + 2 L-glutamate + 2 ADP + 2 phosphate + 2 H(+). Its pathway is cofactor biosynthesis; adenosylcobalamin biosynthesis; cob(II)yrinate a,c-diamide from precorrin-2 (aerobic route): step 9/10. Functionally, catalyzes the ATP-dependent amidation of the two carboxylate groups at positions a and c of hydrogenobyrinate, using either L-glutamine or ammonia as the nitrogen source. This chain is Hydrogenobyrinate a,c-diamide synthase, found in Brucella ovis (strain ATCC 25840 / 63/290 / NCTC 10512).